Reading from the N-terminus, the 396-residue chain is Phosphopentomutase (396 aa).

Aspartate 13, aspartate 288, histidine 293, aspartate 329, histidine 330, and histidine 341 together coordinate Mn(2+).

The protein belongs to the phosphopentomutase family. Mn(2+) is required as a cofactor.

The protein localises to the cytoplasm. It catalyses the reaction 2-deoxy-alpha-D-ribose 1-phosphate = 2-deoxy-D-ribose 5-phosphate. It carries out the reaction alpha-D-ribose 1-phosphate = D-ribose 5-phosphate. Its pathway is carbohydrate degradation; 2-deoxy-D-ribose 1-phosphate degradation; D-glyceraldehyde 3-phosphate and acetaldehyde from 2-deoxy-alpha-D-ribose 1-phosphate: step 1/2. Isomerase that catalyzes the conversion of deoxy-ribose 1-phosphate (dRib-1-P) and ribose 1-phosphate (Rib-1-P) to deoxy-ribose 5-phosphate (dRib-5-P) and ribose 5-phosphate (Rib-5-P), respectively. The chain is Phosphopentomutase from Clostridium botulinum (strain Alaska E43 / Type E3).